The chain runs to 200 residues: Dephospho-CoA kinase (200 aa).

Residues 4–200 (VIGLTGGIAS…AILKKWNIID (197 aa)) enclose the DPCK domain. Position 12–17 (12–17 (ASGKST)) interacts with ATP.

This sequence belongs to the CoaE family.

It localises to the cytoplasm. It catalyses the reaction 3'-dephospho-CoA + ATP = ADP + CoA + H(+). It functions in the pathway cofactor biosynthesis; coenzyme A biosynthesis; CoA from (R)-pantothenate: step 5/5. In terms of biological role, catalyzes the phosphorylation of the 3'-hydroxyl group of dephosphocoenzyme A to form coenzyme A. The polypeptide is Dephospho-CoA kinase (Bacillus thuringiensis subsp. konkukian (strain 97-27)).